Consider the following 491-residue polypeptide: UDP-N-acetylmuramate--L-alanine ligase (491 aa).

126–132 (GTHGKTT) lines the ATP pocket.

The protein belongs to the MurCDEF family.

Its subcellular location is the cytoplasm. It carries out the reaction UDP-N-acetyl-alpha-D-muramate + L-alanine + ATP = UDP-N-acetyl-alpha-D-muramoyl-L-alanine + ADP + phosphate + H(+). The protein operates within cell wall biogenesis; peptidoglycan biosynthesis. In terms of biological role, cell wall formation. The sequence is that of UDP-N-acetylmuramate--L-alanine ligase from Salmonella typhimurium (strain LT2 / SGSC1412 / ATCC 700720).